The following is a 202-amino-acid chain: ATP-dependent Clp protease proteolytic subunit (202 aa).

Ser106 functions as the Nucleophile in the catalytic mechanism. His131 is an active-site residue.

Belongs to the peptidase S14 family. In terms of assembly, fourteen ClpP subunits assemble into 2 heptameric rings which stack back to back to give a disk-like structure with a central cavity, resembling the structure of eukaryotic proteasomes.

Its subcellular location is the cytoplasm. The catalysed reaction is Hydrolysis of proteins to small peptides in the presence of ATP and magnesium. alpha-casein is the usual test substrate. In the absence of ATP, only oligopeptides shorter than five residues are hydrolyzed (such as succinyl-Leu-Tyr-|-NHMec, and Leu-Tyr-Leu-|-Tyr-Trp, in which cleavage of the -Tyr-|-Leu- and -Tyr-|-Trp bonds also occurs).. In terms of biological role, cleaves peptides in various proteins in a process that requires ATP hydrolysis. Has a chymotrypsin-like activity. Plays a major role in the degradation of misfolded proteins. This chain is ATP-dependent Clp protease proteolytic subunit, found in Shewanella baltica (strain OS223).